We begin with the raw amino-acid sequence, 182 residues long: Translation initiation factor IF-3 (182 aa).

Belongs to the IF-3 family. As to quaternary structure, monomer.

It is found in the cytoplasm. Its function is as follows. IF-3 binds to the 30S ribosomal subunit and shifts the equilibrium between 70S ribosomes and their 50S and 30S subunits in favor of the free subunits, thus enhancing the availability of 30S subunits on which protein synthesis initiation begins. The polypeptide is Translation initiation factor IF-3 (Endomicrobium trichonymphae).